Reading from the N-terminus, the 338-residue chain is MKVLGIESSCDDCCAAIVENGNTILSNIKLSQKEHKKYYGIVPEIASRLHTEFIMYVCQQAIISAQINISEIDLIAVTSQPGLIGSLIVGVNFAKGLSIALKKPLICIDHILGHLYAPLLNHTIEYPFLSLVLSGGHTILAKQNNFDDIEILGRTLDDACGEAFDKIAKHYKMGFPGGPNIEKLAIDGNQYAFNFPITIFDKKENRYDFSYSGLKTACIHQLEKFKNNNAQITNNNIAASFQRAAFENLIIPIKRAIKDTNIKKLIISGGVASNLYLREKIKNLEIETYYPPIDLCTDNAAMIAGIGYLMYLKYGASSIETNANSRIENYKYTKGVKL.

Fe cation is bound by residues histidine 110 and histidine 114. Substrate is bound by residues 132–136 (VLSGG), aspartate 165, glycine 178, and asparagine 274. Position 298 (aspartate 298) interacts with Fe cation.

The protein belongs to the KAE1 / TsaD family. It depends on Fe(2+) as a cofactor.

It is found in the cytoplasm. The enzyme catalyses L-threonylcarbamoyladenylate + adenosine(37) in tRNA = N(6)-L-threonylcarbamoyladenosine(37) in tRNA + AMP + H(+). Functionally, required for the formation of a threonylcarbamoyl group on adenosine at position 37 (t(6)A37) in tRNAs that read codons beginning with adenine. Is involved in the transfer of the threonylcarbamoyl moiety of threonylcarbamoyl-AMP (TC-AMP) to the N6 group of A37, together with TsaE and TsaB. TsaD likely plays a direct catalytic role in this reaction. This is tRNA N6-adenosine threonylcarbamoyltransferase from Borrelia duttonii (strain Ly).